The sequence spans 536 residues: 1,4-beta-D-glucan cellobiohydrolase B (536 aa).

The signal sequence occupies residues 1 to 21; it reads MSSFQIYRAALLLSILATANA. Residues 22-458 are catalytic; that stretch reads QQVGTYTTET…SNIKFGPIGS (437 aa). Glutamate 233 acts as the Nucleophile in catalysis. Glutamate 238 serves as the catalytic Proton donor. Asparagine 351 and asparagine 414 each carry an N-linked (GlcNAc...) asparagine glycan. The tract at residues 459 to 500 is ser/Thr-rich linker; sequence TYSSGSSSGSGSSSSSSSTTTKATSTTLKTTSTTSSGSSSTS. The interval 464 to 499 is disordered; sequence SSSGSGSSSSSSSTTTKATSTTLKTTSTTSSGSSST. A CBM1 domain is found at 500–536; it reads SAAQAYGQCGGQGWTGPTTCVSGYTCTYENAYYSQCL. 2 disulfide bridges follow: cysteine 508/cysteine 525 and cysteine 519/cysteine 535.

The protein belongs to the glycosyl hydrolase 7 (cellulase C) family.

It is found in the secreted. The enzyme catalyses Hydrolysis of (1-&gt;4)-beta-D-glucosidic linkages in cellulose and cellotetraose, releasing cellobiose from the non-reducing ends of the chains.. The biological conversion of cellulose to glucose generally requires three types of hydrolytic enzymes: (1) Endoglucanases which cut internal beta-1,4-glucosidic bonds; (2) Exocellobiohydrolases that cut the disaccharide cellobiose from the non-reducing end of the cellulose polymer chain; (3) Beta-1,4-glucosidases which hydrolyze the cellobiose and other short cello-oligosaccharides to glucose. The sequence is that of 1,4-beta-D-glucan cellobiohydrolase B (cbhB) from Aspergillus niger.